The sequence spans 443 residues: Probable D-serine dehydratase (443 aa).

N6-(pyridoxal phosphate)lysine is present on Lys118.

This sequence belongs to the serine/threonine dehydratase family. DsdA subfamily. Pyridoxal 5'-phosphate serves as cofactor.

The enzyme catalyses D-serine = pyruvate + NH4(+). The chain is Probable D-serine dehydratase from Aeromonas hydrophila subsp. hydrophila (strain ATCC 7966 / DSM 30187 / BCRC 13018 / CCUG 14551 / JCM 1027 / KCTC 2358 / NCIMB 9240 / NCTC 8049).